The primary structure comprises 367 residues: Putative methylthioribose-1-phosphate isomerase (367 aa).

Substrate-binding positions include Arg65–Ala67, Arg106, and Gln218. Residue Asp259 is the Proton donor of the active site. Residue Asn269 to Lys270 participates in substrate binding.

The protein belongs to the eIF-2B alpha/beta/delta subunits family. MtnA subfamily.

The enzyme catalyses 5-(methylsulfanyl)-alpha-D-ribose 1-phosphate = 5-(methylsulfanyl)-D-ribulose 1-phosphate. Catalyzes the interconversion of methylthioribose-1-phosphate (MTR-1-P) into methylthioribulose-1-phosphate (MTRu-1-P). The chain is Putative methylthioribose-1-phosphate isomerase from Sulfolobus acidocaldarius (strain ATCC 33909 / DSM 639 / JCM 8929 / NBRC 15157 / NCIMB 11770).